A 305-amino-acid chain; its full sequence is Sulfate adenylyltransferase subunit 2 (305 aa).

Belongs to the PAPS reductase family. CysD subfamily. Heterodimer composed of CysD, the smaller subunit, and CysN.

The catalysed reaction is sulfate + ATP + H(+) = adenosine 5'-phosphosulfate + diphosphate. The protein operates within sulfur metabolism; hydrogen sulfide biosynthesis; sulfite from sulfate: step 1/3. Functionally, with CysN forms the ATP sulfurylase (ATPS) that catalyzes the adenylation of sulfate producing adenosine 5'-phosphosulfate (APS) and diphosphate, the first enzymatic step in sulfur assimilation pathway. APS synthesis involves the formation of a high-energy phosphoric-sulfuric acid anhydride bond driven by GTP hydrolysis by CysN coupled to ATP hydrolysis by CysD. The polypeptide is Sulfate adenylyltransferase subunit 2 (Pseudomonas aeruginosa (strain LESB58)).